We begin with the raw amino-acid sequence, 897 residues long: 3'-5' exonuclease DinG (897 aa).

One can recognise an Exonuclease domain in the interval Val8–Leu161. Residues Ser241 to Arg496 form the Helicase ATP-binding domain. Ala276–Ser283 is an ATP binding site. The DEAH box signature appears at Asp448–His451. The Helicase C-terminal domain maps to Asn703–Gln893.

It belongs to the helicase family. DinG subfamily. Type 2 sub-subfamily.

Functionally, 3'-5' exonuclease. The chain is 3'-5' exonuclease DinG from Staphylococcus aureus (strain USA300).